We begin with the raw amino-acid sequence, 192 residues long: Small ribosomal subunit protein uS4B (192 aa).

Residues 83-145 (RRLDNLVYRL…SRKIQTYASN (63 aa)) enclose the S4 RNA-binding domain.

Belongs to the universal ribosomal protein uS4 family. In terms of assembly, part of the 30S ribosomal subunit. Contacts protein S5. The interaction surface between S4 and S5 is involved in control of translational fidelity.

Functionally, one of the primary rRNA binding proteins, it binds directly to 16S rRNA where it nucleates assembly of the body of the 30S subunit. With S5 and S12 plays an important role in translational accuracy. In Clostridium acetobutylicum (strain ATCC 824 / DSM 792 / JCM 1419 / IAM 19013 / LMG 5710 / NBRC 13948 / NRRL B-527 / VKM B-1787 / 2291 / W), this protein is Small ribosomal subunit protein uS4B (rpsD2).